We begin with the raw amino-acid sequence, 61 residues long: Nakoroxin (61 aa).

Intrachain disulfides connect C3/C19, C12/C37, C41/C49, and C50/C55.

The protein belongs to the three-finger toxin family. Short-chain subfamily. As to expression, expressed by the venom gland.

It localises to the secreted. Its function is as follows. Shows no cytotoxicity and does not inhibit the binding of alpha-bungarotoxin to nicotinic acetylcholine receptors of muscle and alpha-7/CHRNA7 types. However, it potentiates the binding of alpha-bungarotoxin to the acetylcholine-binding protein from Lymnaea stagnalis. The polypeptide is Nakoroxin (Naja kaouthia (Monocled cobra)).